Here is a 332-residue protein sequence, read N- to C-terminus: 3-dehydrosphinganine reductase (332 aa).

The N-terminal stretch at 1 to 25 (MLLVVAAFIVAFVLLLYMISPLISP) is a signal peptide. NADPH is bound by residues G39, S41, S42, G43, R64, D65, K68, and D93. The short motif at 39 to 43 (GGSSG) is the GXSXG element. S172 functions as the Proton donor in the catalytic mechanism. Catalysis depends on Y186, which acts as the Proton acceptor. Y186 and K190 together coordinate NADP(+). K190 functions as the Lowers pKa of active site Tyr in the catalytic mechanism.

This sequence belongs to the short-chain dehydrogenases/reductases (SDR) family.

Its subcellular location is the endoplasmic reticulum. The enzyme catalyses sphinganine + NADP(+) = 3-oxosphinganine + NADPH + H(+). It functions in the pathway lipid metabolism; sphingolipid metabolism. Functionally, catalyzes the reduction of 3'-oxosphinganine (3-ketodihydrosphingosine/KDS) to sphinganine (dihydrosphingosine/DHS), the second step of de novo sphingolipid biosynthesis. This Danio rerio (Zebrafish) protein is 3-dehydrosphinganine reductase (kdsr).